Consider the following 194-residue polypeptide: Peptidyl-tRNA hydrolase (194 aa).

A tRNA-binding site is contributed by Tyr-17. His-22 functions as the Proton acceptor in the catalytic mechanism. 3 residues coordinate tRNA: Phe-68, Asn-70, and Asn-116.

This sequence belongs to the PTH family. In terms of assembly, monomer.

It is found in the cytoplasm. The catalysed reaction is an N-acyl-L-alpha-aminoacyl-tRNA + H2O = an N-acyl-L-amino acid + a tRNA + H(+). Its function is as follows. Hydrolyzes ribosome-free peptidyl-tRNAs (with 1 or more amino acids incorporated), which drop off the ribosome during protein synthesis, or as a result of ribosome stalling. In terms of biological role, catalyzes the release of premature peptidyl moieties from peptidyl-tRNA molecules trapped in stalled 50S ribosomal subunits, and thus maintains levels of free tRNAs and 50S ribosomes. The polypeptide is Peptidyl-tRNA hydrolase (Mannheimia succiniciproducens (strain KCTC 0769BP / MBEL55E)).